A 1679-amino-acid polypeptide reads, in one-letter code: Protein MLP2 (1679 aa).

Coiled coils occupy residues 32-176 (AKFE…KYDT), 233-466 (YNKF…RQVK), 516-1064 (FSNV…EREL), and 1099-1491 (KLVS…ENAG). Short sequence motifs (bipartite nuclear localization signal) lie at residues 417–433 (KRST…KRKQ), 639–655 (RKEL…KKTT), and 1433–1449 (KKEW…RRIK). 2 disordered regions span residues 1495-1521 (FLDN…SERP) and 1632-1679 (DLTN…ASNE). 2 stretches are compositionally biased toward polar residues: residues 1511–1520 (NSPSKGNSER) and 1646–1661 (IGST…TSSD). A Phosphoserine modification is found at S1512. A compositionally biased stretch (basic and acidic residues) spans 1662 to 1671 (PDTKKVKESP). Position 1670 is a phosphoserine (S1670).

In terms of assembly, component of the nuclear complex (NPC). NPC constitutes the exclusive means of nucleocytoplasmic transport. NPCs allow the passive diffusion of ions and small molecules and the active, nuclear transport receptor-mediated bidirectional transport of macromolecules such as proteins, RNAs, ribonucleoparticles (RNPs), and ribosomal subunits across the nuclear envelope. Due to its 8-fold rotational symmetry, all subunits are present with 8 copies or multiples thereof. Interacts with NUP60 and NIC96, which tether it to the nuclear pore complex. Component of the spindle pole body core in which it interacts directly with SPC110, SPC42 and SPC29. Also interacts with YKU70 (HDF1) and MLP1.

The protein localises to the nucleus. It is found in the cytoplasm. Its subcellular location is the cytoskeleton. The protein resides in the microtubule organizing center. It localises to the spindle pole body. The protein localises to the nuclear pore complex. Its function is as follows. Together with the closely related MLP1, involved in the structural and functional organization of perinuclear chromatin. MLP1/MLP2 associate with the nuclear pore complex and form filamentous structures along the nuclear periphery. Has a role in the localization of Esc1 to nucleolar regions. Together with MLP1, mediates tethering of the some telomeres to the nuclear periphery, probably mediated by YKU70/YKU80 (HDF1/HDF2) heterodimer and show perinuclear location dependent silencing. MLP1 and MLP2 are involved in telomere length regulation but not silencing or telomere anchoring. Plays a role in the incorporation of components into the spindle pole body. Involved in double-strand break repair, probably also mediated by the YKU70/YKU80 (HDF1/HDF2) heterodimer. The sequence is that of Protein MLP2 (MLP2) from Saccharomyces cerevisiae (strain ATCC 204508 / S288c) (Baker's yeast).